Reading from the N-terminus, the 265-residue chain is MRLGLCVVALVLSWTHIAVGSRGIKGKRQRRISAEGSQACAKGCELCSEVNGCLKCSPKLFILLERNDIRQVGVCLPSCPPGYFDARNPDMNKCIKCKIEHCEACFSHNFCTKCQEALYLHKGRCYPACPEGSTAANSTMECGSPAQCEMSEWSPWGPCSKKRKLCGFRKGSEERTRRVLHAPGGDHTTCSDTKETRKCTVRRTPCPEGQKRRKGGQGRRENANRHPARKNSKEPRSNSRRHKGQQQPQPGTTGPLTSVGPTWAQ.

The N-terminal stretch at 1–20 (MRLGLCVVALVLSWTHIAVG) is a signal peptide. FU repeat units follow at residues 34 to 85 (AEGS…GYFD) and 91 to 135 (MNKC…GSTA). Cystine bridges form between Cys-40/Cys-47, Cys-44/Cys-53, Cys-56/Cys-75, Cys-79/Cys-94, Cys-97/Cys-105, Cys-102/Cys-111, Cys-114/Cys-125, Cys-129/Cys-142, Cys-148/Cys-190, Cys-159/Cys-166, and Cys-199/Cys-206. Asn-137 is a glycosylation site (N-linked (GlcNAc...) asparagine). The TSP type-1 domain maps to 147 to 207 (QCEMSEWSPW…KCTVRRTPCP (61 aa)). A C-linked (Man) tryptophan glycan is attached at Trp-153. Residue Trp-156 is glycosylated (C-linked (Man) tryptophan; by DPY19L3). Disordered stretches follow at residues 173-192 (EERT…TCSD) and 201-265 (VRRT…TWAQ). The span at 245-257 (QQQPQPGTTGPLT) shows a compositional bias: low complexity.

It belongs to the R-spondin family. As to quaternary structure, interacts with ZNRF3; promoting indirect interaction between ZNRF3 and LGR4 and membrane clearance of ZNRF3. Identified in a complex composed of RNF43, LGR5 and RSPO1. Interacts with the extracellular domain of FZD8 and LRP6. It however does not form a ternary complex with FZD8 and LRP6. Interacts with WNT1. Binds heparin. Interacts with LGR4, LGR5 and LGR6. Interacts (via FU repeats) with KREM1. C-, and N-glycosylated. N-glycosylation at Asn-137, negatively influences its secretion and enhancing effect on Wnt/beta-catenin signaling. C-mannosylation at Trp-156 by DPY19L3 is required for its secretion an regulates the enhancing activity of Wnt signaling. As to expression, expressed in the dorsal part of the neural tube on 10 and 12 dpc, especially in the boundary region between roof plate and neuroepithelium. This expression is enhanced in the rostral part. Also expressed in other tissues such as truncal region neighboring forelimbs and mesenchymal tissues around the nasal cavity.

The protein resides in the secreted. It is found in the nucleus. Functionally, activator of the canonical Wnt signaling pathway by acting as a ligand for LGR4-6 receptors. Upon binding to LGR4-6 (LGR4, LGR5 or LGR6), LGR4-6 associate with phosphorylated LRP6 and frizzled receptors that are activated by extracellular Wnt receptors, triggering the canonical Wnt signaling pathway to increase expression of target genes. Also regulates the canonical Wnt/beta-catenin-dependent pathway and non-canonical Wnt signaling by acting as an inhibitor of ZNRF3, an important regulator of the Wnt signaling pathway. Acts as a ligand for frizzled FZD8 and LRP6. May negatively regulate the TGF-beta pathway. Has a essential roles in ovary determination. Regulates Wnt signaling by antagonizing DKK1/KREM1-mediated internalization of LRP6 through an interaction with KREM1. This Mus musculus (Mouse) protein is R-spondin-1 (Rspo1).